We begin with the raw amino-acid sequence, 914 residues long: Linoleate 13S-lipoxygenase 3-1, chloroplastic (914 aa).

The transit peptide at 1 to 83 (MALAKEIMGI…PEKAVRFKVR (83 aa)) directs the protein to the chloroplast. Residues 96 to 218 (LKETIVKHLD…DHPGKRIFFS (123 aa)) enclose the PLAT domain. The region spanning 221-914 (PYLPDETPAG…CRGVPNSVSI (694 aa)) is the Lipoxygenase domain. Positions 574, 579, 765, 769, and 914 each coordinate Fe cation.

It belongs to the lipoxygenase family. In terms of assembly, monomer. It depends on Fe cation as a cofactor. Expressed in roots and leaves. Detected in tubers and flower buds.

It is found in the plastid. It localises to the chloroplast stroma. Its subcellular location is the chloroplast thylakoid. It carries out the reaction (9Z,12Z)-octadecadienoate + O2 = (13S)-hydroperoxy-(9Z,11E)-octadecadienoate. The enzyme catalyses (9Z,12Z,15Z)-octadecatrienoate + O2 = (13S)-hydroperoxy-(9Z,11E,15Z)-octadecatrienoate. Its pathway is lipid metabolism; oxylipin biosynthesis. Plant lipoxygenases may be involved in a number of diverse aspects of plant physiology including growth and development, pest resistance, and senescence or responses to wounding. Required for the regulation of wound-induced gene expression, but is not involved in the bulk production of jasmonate upon wounding. Catalyzes the hydroperoxidation of lipids containing a cis,cis-1,4-pentadiene structure. Linolenic acid is the preferred substrate, before linoleic and arachidonic acids. This is Linoleate 13S-lipoxygenase 3-1, chloroplastic (LOX3.1) from Solanum tuberosum (Potato).